Reading from the N-terminus, the 422-residue chain is Autophagy-related protein 21 (422 aa).

WD repeat units follow at residues 1 to 35 (MGLSRFNQDATCFVTSSEGNSVTIYNCDPFGKCFE), 102 to 153 (SFPH…ITGQ), 166 to 206 (MTSL…SKSV), 228 to 268 (VHKG…ESEL), 280 to 319 (NRPCNINQLTFNSDSTLLGCVGDSDTIHIFKLDSTSRLLS), and 374 to 414 (KNTK…GSCV). The L/FRRG motif motif lies at 276 to 280 (FRRGN).

It belongs to the WD repeat PROPPIN family.

The protein localises to the cytoplasm. Its subcellular location is the membrane. It localises to the vacuole membrane. Functionally, required for cytoplasm to vacuole transport (Cvt) vesicles formation and mitophagy. Involved in binding of phosphatidylethanolamine to ATG8 and in recruitment of ATG8 and ATG5 to the pre-autophagosomal structure. Protects ATG8 from ARG4-mediated cleavage. The protein is Autophagy-related protein 21 (ATG21) of Vanderwaltozyma polyspora (strain ATCC 22028 / DSM 70294 / BCRC 21397 / CBS 2163 / NBRC 10782 / NRRL Y-8283 / UCD 57-17) (Kluyveromyces polysporus).